The following is a 514-amino-acid chain: Serine--tRNA ligase, cytoplasmic (514 aa).

Methionine 1 carries the N-acetylmethionine modification. The interval 9–61 (RVDKGGDPALIRETQEKRFKDPGLVDQLVKADSEWRRCRFRADNLNKLKNLCS) is interaction with tRNA. A Phosphoserine modification is found at serine 241. 2 residues coordinate L-serine: threonine 271 and arginine 302. ATP-binding positions include 302 to 304 (RQE) and 318 to 321 (VHQF). Residue lysine 323 is modified to N6-acetyllysine. Glutamate 325 serves as a coordination point for L-serine. Position 391 to 394 (391 to 394 (ELVS)) interacts with ATP. Asparagine 427 is a binding site for L-serine. A disordered region spans residues 472–514 (KPAPIDQEPSKKQKKQHEGSKKKAAARDVTLENRLQNMEVTDA). Residues 479–502 (EPSKKQKKQHEGSKKKAAARDVTL) show a composition bias toward basic and acidic residues. A Nuclear localization signal motif is present at residues 482 to 494 (KKQKKQHEGSKKK). A compositionally biased stretch (polar residues) spans 504-514 (NRLQNMEVTDA).

Belongs to the class-II aminoacyl-tRNA synthetase family. Type-1 seryl-tRNA synthetase subfamily. As to quaternary structure, homodimer. The tRNA molecule may bind across the dimer. Interacts with SIRT2. Interacts with METTL6; interaction is required for the tRNA N(3)-methylcytidine methyltransferase activity of METTL6.

The protein resides in the cytoplasm. The protein localises to the nucleus. The catalysed reaction is tRNA(Ser) + L-serine + ATP = L-seryl-tRNA(Ser) + AMP + diphosphate + H(+). It catalyses the reaction tRNA(Sec) + L-serine + ATP = L-seryl-tRNA(Sec) + AMP + diphosphate + H(+). The protein operates within aminoacyl-tRNA biosynthesis; selenocysteinyl-tRNA(Sec) biosynthesis; L-seryl-tRNA(Sec) from L-serine and tRNA(Sec): step 1/1. In terms of biological role, catalyzes the attachment of serine to tRNA(Ser) in a two-step reaction: serine is first activated by ATP to form Ser-AMP and then transferred to the acceptor end of tRNA(Ser). Is probably also able to aminoacylate tRNA(Sec) with serine, to form the misacylated tRNA L-seryl-tRNA(Sec), which will be further converted into selenocysteinyl-tRNA(Sec). In the nucleus, binds to the VEGFA core promoter and prevents MYC binding and transcriptional activation by MYC. Recruits SIRT2 to the VEGFA promoter, promoting deacetylation of histone H4 at 'Lys-16' (H4K16). Thereby, inhibits the production of VEGFA and sprouting angiogenesis mediated by VEGFA. The sequence is that of Serine--tRNA ligase, cytoplasmic (SARS1) from Oryctolagus cuniculus (Rabbit).